A 236-amino-acid chain; its full sequence is THO complex subunit 7B (236 aa).

A coiled-coil region spans residues 99-228; it reads EANLREKESF…IRSASEDQRN (130 aa).

It belongs to the THOC7 family. Component of the THO complex, which is composed of THO1, THO2, THO3, THO5, THO6 and THO7.

It localises to the nucleus. Its function is as follows. Acts as a component of the THO subcomplex of the TREX complex which is thought to couple mRNA transcription, processing and nuclear export. This is THO complex subunit 7B (THO7B) from Arabidopsis thaliana (Mouse-ear cress).